Reading from the N-terminus, the 172-residue chain is Ubiquitin-conjugating enzyme E2 PEX4 (172 aa).

A UBC core domain is found at 14 to 167 (SASKRLIKEL…VELWCQDSDS (154 aa)). Catalysis depends on C104, which acts as the Glycyl thioester intermediate.

This sequence belongs to the ubiquitin-conjugating enzyme family.

The enzyme catalyses S-ubiquitinyl-[E1 ubiquitin-activating enzyme]-L-cysteine + [E2 ubiquitin-conjugating enzyme]-L-cysteine = [E1 ubiquitin-activating enzyme]-L-cysteine + S-ubiquitinyl-[E2 ubiquitin-conjugating enzyme]-L-cysteine.. The protein operates within protein modification; protein ubiquitination. Functionally, ubiquitin-conjugating enzyme E2 that is essential for peroxisome biogenesis and plays a key role in development, pathogenicity, and cell wall integrity. Required for long and very long-chain fatty acid utilization and is involved in lipid droplet accumulation and the elimination of reactive oxygen species. Controls the expression of proteins involved in protein biosynthesis, fatty acid metabolism, cell wall synthesis, oxidation-reduction reactions, as well as of the enzymes involved in the biosynthesis of the mycotoxin deoxynivalenol (DON), including TRI5, TRI6, and TRI10. The protein is Ubiquitin-conjugating enzyme E2 PEX4 of Gibberella zeae (strain ATCC MYA-4620 / CBS 123657 / FGSC 9075 / NRRL 31084 / PH-1) (Wheat head blight fungus).